Reading from the N-terminus, the 132-residue chain is Small ribosomal subunit protein uS8c (132 aa).

This sequence belongs to the universal ribosomal protein uS8 family. Part of the 30S ribosomal subunit.

The protein localises to the plastid. The protein resides in the chloroplast. Functionally, one of the primary rRNA binding proteins, it binds directly to 16S rRNA central domain where it helps coordinate assembly of the platform of the 30S subunit. The sequence is that of Small ribosomal subunit protein uS8c (rps8) from Amborella trichopoda.